The chain runs to 156 residues: Small ribosomal subunit protein uS7 (156 aa).

The protein belongs to the universal ribosomal protein uS7 family. As to quaternary structure, part of the 30S ribosomal subunit. Contacts proteins S9 and S11.

In terms of biological role, one of the primary rRNA binding proteins, it binds directly to 16S rRNA where it nucleates assembly of the head domain of the 30S subunit. Is located at the subunit interface close to the decoding center, probably blocks exit of the E-site tRNA. The chain is Small ribosomal subunit protein uS7 from Acidobacterium capsulatum (strain ATCC 51196 / DSM 11244 / BCRC 80197 / JCM 7670 / NBRC 15755 / NCIMB 13165 / 161).